The sequence spans 432 residues: Bifunctional protein GlmU (432 aa).

A pyrophosphorylase region spans residues 1-223; it reads MGKKSIIILA…EENFKGVNSK (223 aa). Residues 9 to 12, lysine 23, glutamine 75, and 82 to 83 contribute to the UDP-N-acetyl-alpha-D-glucosamine site; these read LAAG and GT. Mg(2+) is bound at residue aspartate 103. Residues glycine 135, glutamate 149, asparagine 164, and asparagine 221 each contribute to the UDP-N-acetyl-alpha-D-glucosamine site. Asparagine 221 is a binding site for Mg(2+). The tract at residues 224–244 is linker; that stretch reads VELADAEVIHQNRIKKEFMKA. The tract at residues 245–432 is N-acetyltransferase; it reads GVIMRLPDTI…FYKHFSSKKK (188 aa). Residues arginine 308 and lysine 325 each coordinate UDP-N-acetyl-alpha-D-glucosamine. The active-site Proton acceptor is the histidine 336. Positions 339 and 350 each coordinate UDP-N-acetyl-alpha-D-glucosamine. Acetyl-CoA contacts are provided by residues 359-360, serine 378, alanine 396, and arginine 413; that span reads NY.

The protein in the N-terminal section; belongs to the N-acetylglucosamine-1-phosphate uridyltransferase family. This sequence in the C-terminal section; belongs to the transferase hexapeptide repeat family. In terms of assembly, homotrimer. Mg(2+) is required as a cofactor.

Its subcellular location is the cytoplasm. The catalysed reaction is alpha-D-glucosamine 1-phosphate + acetyl-CoA = N-acetyl-alpha-D-glucosamine 1-phosphate + CoA + H(+). It carries out the reaction N-acetyl-alpha-D-glucosamine 1-phosphate + UTP + H(+) = UDP-N-acetyl-alpha-D-glucosamine + diphosphate. It participates in nucleotide-sugar biosynthesis; UDP-N-acetyl-alpha-D-glucosamine biosynthesis; N-acetyl-alpha-D-glucosamine 1-phosphate from alpha-D-glucosamine 6-phosphate (route II): step 2/2. Its pathway is nucleotide-sugar biosynthesis; UDP-N-acetyl-alpha-D-glucosamine biosynthesis; UDP-N-acetyl-alpha-D-glucosamine from N-acetyl-alpha-D-glucosamine 1-phosphate: step 1/1. The protein operates within bacterial outer membrane biogenesis; LPS lipid A biosynthesis. Functionally, catalyzes the last two sequential reactions in the de novo biosynthetic pathway for UDP-N-acetylglucosamine (UDP-GlcNAc). The C-terminal domain catalyzes the transfer of acetyl group from acetyl coenzyme A to glucosamine-1-phosphate (GlcN-1-P) to produce N-acetylglucosamine-1-phosphate (GlcNAc-1-P), which is converted into UDP-GlcNAc by the transfer of uridine 5-monophosphate (from uridine 5-triphosphate), a reaction catalyzed by the N-terminal domain. The chain is Bifunctional protein GlmU from Aliarcobacter butzleri (strain RM4018) (Arcobacter butzleri).